The chain runs to 594 residues: 4-alpha-glucanotransferase DPE1, chloroplastic/amyloplastic (594 aa).

A chloroplast-targeting transit peptide spans 1-37 (MATLSLPLPHLTQAIPARARPRPRPLRGIPARLLSCR).

It belongs to the disproportionating enzyme family.

Its subcellular location is the plastid. It localises to the chloroplast. The protein resides in the amyloplast. The enzyme catalyses Transfers a segment of a (1-&gt;4)-alpha-D-glucan to a new position in an acceptor, which may be glucose or a (1-&gt;4)-alpha-D-glucan.. Chloroplastic alpha-glucanotransferase involved in maltotriose metabolism. This is 4-alpha-glucanotransferase DPE1, chloroplastic/amyloplastic (DPE1) from Oryza sativa subsp. japonica (Rice).